Reading from the N-terminus, the 435-residue chain is GTPase Obg (435 aa).

The Obg domain maps to 1–158; the sequence is MFIDRAKIYV…RWLYLELKLL (158 aa). Positions 159-328 constitute an OBG-type G domain; it reads ADVGLVGLPN…LLELMEKYVR (170 aa). GTP-binding positions include 165 to 172, 190 to 194, 211 to 214, 280 to 283, and 309 to 311; these read GLPNAGKS, FTTKT, DIPG, NKID, and SAK. Mg(2+) is bound by residues Ser172 and Thr192. Residues 343 to 426 form the OCT domain; sequence IQETKEGRVE…IGDYIFKYNA (84 aa).

This sequence belongs to the TRAFAC class OBG-HflX-like GTPase superfamily. OBG GTPase family. In terms of assembly, monomer. Mg(2+) serves as cofactor.

The protein resides in the cytoplasm. An essential GTPase which binds GTP, GDP and possibly (p)ppGpp with moderate affinity, with high nucleotide exchange rates and a fairly low GTP hydrolysis rate. Plays a role in control of the cell cycle, stress response, ribosome biogenesis and in those bacteria that undergo differentiation, in morphogenesis control. This Dictyoglomus thermophilum (strain ATCC 35947 / DSM 3960 / H-6-12) protein is GTPase Obg.